The chain runs to 146 residues: Urease accessory protein UreE 1 (146 aa).

Belongs to the UreE family.

It is found in the cytoplasm. Involved in urease metallocenter assembly. Binds nickel. Probably functions as a nickel donor during metallocenter assembly. In Pseudomonas syringae pv. tomato (strain ATCC BAA-871 / DC3000), this protein is Urease accessory protein UreE 1.